We begin with the raw amino-acid sequence, 252 residues long: Imidazole glycerol phosphate synthase subunit HisF (252 aa).

Catalysis depends on residues aspartate 11 and aspartate 130.

The protein belongs to the HisA/HisF family. Heterodimer of HisH and HisF.

Its subcellular location is the cytoplasm. It carries out the reaction 5-[(5-phospho-1-deoxy-D-ribulos-1-ylimino)methylamino]-1-(5-phospho-beta-D-ribosyl)imidazole-4-carboxamide + L-glutamine = D-erythro-1-(imidazol-4-yl)glycerol 3-phosphate + 5-amino-1-(5-phospho-beta-D-ribosyl)imidazole-4-carboxamide + L-glutamate + H(+). It participates in amino-acid biosynthesis; L-histidine biosynthesis; L-histidine from 5-phospho-alpha-D-ribose 1-diphosphate: step 5/9. Functionally, IGPS catalyzes the conversion of PRFAR and glutamine to IGP, AICAR and glutamate. The HisF subunit catalyzes the cyclization activity that produces IGP and AICAR from PRFAR using the ammonia provided by the HisH subunit. The polypeptide is Imidazole glycerol phosphate synthase subunit HisF (Azoarcus sp. (strain BH72)).